Reading from the N-terminus, the 462-residue chain is UDP-N-acetylmuramoylalanine--D-glutamate ligase (462 aa).

118–124 (GTNGKST) is an ATP binding site.

It belongs to the MurCDEF family.

The protein resides in the cytoplasm. It carries out the reaction UDP-N-acetyl-alpha-D-muramoyl-L-alanine + D-glutamate + ATP = UDP-N-acetyl-alpha-D-muramoyl-L-alanyl-D-glutamate + ADP + phosphate + H(+). It participates in cell wall biogenesis; peptidoglycan biosynthesis. Its function is as follows. Cell wall formation. Catalyzes the addition of glutamate to the nucleotide precursor UDP-N-acetylmuramoyl-L-alanine (UMA). In Anaeromyxobacter dehalogenans (strain 2CP-C), this protein is UDP-N-acetylmuramoylalanine--D-glutamate ligase.